The primary structure comprises 42 residues: Large ribosomal subunit protein bL36 (42 aa).

It belongs to the bacterial ribosomal protein bL36 family.

The protein is Large ribosomal subunit protein bL36 of Anaplasma phagocytophilum (strain HZ).